A 329-amino-acid polypeptide reads, in one-letter code: Isoaspartyl peptidase/L-asparaginase (329 aa).

Residue Thr-173 is the Nucleophile of the active site. Substrate-binding positions include Arg-201 to Asp-204 and Thr-222 to Gly-225.

This sequence belongs to the Ntn-hydrolase family. As to quaternary structure, heterotetramer of two alpha and two beta chains arranged as a dimer of alpha/beta heterodimers. Cleaved into an alpha and beta chain by autocatalysis; this activates the enzyme. The N-terminal residue of the beta subunit is responsible for the nucleophile hydrolase activity.

It catalyses the reaction Cleavage of a beta-linked Asp residue from the N-terminus of a polypeptide.. Degrades proteins damaged by L-isoaspartyl residue formation (also known as beta-Asp residues). Probably performs the final step in the degradation of the reserve polymer cyanophycin (depolymerizes the building block L-beta-Asp-Arg). Also has L-asparaginase activity. This chain is Isoaspartyl peptidase/L-asparaginase, found in Synechocystis sp. (strain ATCC 27184 / PCC 6803 / Kazusa).